A 69-amino-acid chain; its full sequence is Large ribosomal subunit protein uL29 (69 aa).

It belongs to the universal ribosomal protein uL29 family.

The protein is Large ribosomal subunit protein uL29 of Parasynechococcus marenigrum (strain WH8102).